The sequence spans 274 residues: Formamidopyrimidine-DNA glycosylase (274 aa).

The active-site Schiff-base intermediate with DNA is proline 2. Catalysis depends on glutamate 3, which acts as the Proton donor. Lysine 58 functions as the Proton donor; for beta-elimination activity in the catalytic mechanism. The DNA site is built by histidine 91, arginine 110, and lysine 152. The segment at 237 to 271 (KVYGRKNLPCLVCENKIETVVIAGRHSAFCPHCQP) adopts an FPG-type zinc-finger fold. Arginine 261 serves as the catalytic Proton donor; for delta-elimination activity.

Belongs to the FPG family. As to quaternary structure, monomer. It depends on Zn(2+) as a cofactor.

The catalysed reaction is Hydrolysis of DNA containing ring-opened 7-methylguanine residues, releasing 2,6-diamino-4-hydroxy-5-(N-methyl)formamidopyrimidine.. The enzyme catalyses 2'-deoxyribonucleotide-(2'-deoxyribose 5'-phosphate)-2'-deoxyribonucleotide-DNA = a 3'-end 2'-deoxyribonucleotide-(2,3-dehydro-2,3-deoxyribose 5'-phosphate)-DNA + a 5'-end 5'-phospho-2'-deoxyribonucleoside-DNA + H(+). Involved in base excision repair of DNA damaged by oxidation or by mutagenic agents. Acts as a DNA glycosylase that recognizes and removes damaged bases. Has a preference for oxidized purines, such as 7,8-dihydro-8-oxoguanine (8-oxoG). Has AP (apurinic/apyrimidinic) lyase activity and introduces nicks in the DNA strand. Cleaves the DNA backbone by beta-delta elimination to generate a single-strand break at the site of the removed base with both 3'- and 5'-phosphates. This chain is Formamidopyrimidine-DNA glycosylase, found in Legionella pneumophila (strain Paris).